The primary structure comprises 125 residues: Putative RNA polymerase sigma-G factor (125 aa).

This sequence belongs to the sigma-70 factor family.

Sigma factors are initiation factors that promote the attachment of RNA polymerase to specific initiation sites and are then released. The sequence is that of Putative RNA polymerase sigma-G factor from Bacillus thuringiensis subsp. kurstaki.